The following is a 225-amino-acid chain: Uridylate kinase (225 aa).

Gly-9 to Ser-10 is a binding site for ATP. Gly-46 contacts UMP. ATP is bound by residues Gly-47 and Arg-51. UMP contacts are provided by residues Asp-67 and Thr-115–Thr-121. Residues Thr-141, Asn-142, Tyr-147, and Asp-150 each coordinate ATP.

Belongs to the UMP kinase family. Homohexamer.

The protein resides in the cytoplasm. The enzyme catalyses UMP + ATP = UDP + ADP. It participates in pyrimidine metabolism; CTP biosynthesis via de novo pathway; UDP from UMP (UMPK route): step 1/1. With respect to regulation, inhibited by UTP. In terms of biological role, catalyzes the reversible phosphorylation of UMP to UDP. The protein is Uridylate kinase of Methanococcus maripaludis (strain C5 / ATCC BAA-1333).